The sequence spans 414 residues: MSLLDHVDPEISAVIRKELDRQRNTLVLVAAENFTSPAVMEAQGCVMTNKYAEGYPGKRYYRGCAFMDEAENLARDRCKKLFGAEHVNVQPHSGSQANMAAYFATLKPGDTIMGMNLDHGGHLSHGSPVNFSGKLYHVVPYGVSRKTEMLDYSEILDVARECRPQMIVCGASAYPRIIDFKAMREIADEVGALLMADIAHIAGLVAAGVHPSPIPYADIVTTTTHKTLRGPRGGVIMCREELAQAIDRAVFPGIQGGPMMHTIAAKAVAFKEAMTPEFRRYQEQIVRNAAALADRLIENGFDLVSGGTDNHLMLVKLLKEGITGKEADETLESAGIALNKNMIPFDPRTPFVTSGIRIGTPAVTSRGMKENEMREIADLITEVIRDMKNPATIESVRSRVRALCERFPLYPELG.

(6S)-5,6,7,8-tetrahydrofolate-binding positions include L117 and 121–123; that span reads GHL. An N6-(pyridoxal phosphate)lysine modification is found at K226. (6S)-5,6,7,8-tetrahydrofolate-binding positions include E241 and 349–351; that span reads TPF.

The protein belongs to the SHMT family. In terms of assembly, homodimer. It depends on pyridoxal 5'-phosphate as a cofactor.

It localises to the cytoplasm. It catalyses the reaction (6R)-5,10-methylene-5,6,7,8-tetrahydrofolate + glycine + H2O = (6S)-5,6,7,8-tetrahydrofolate + L-serine. It participates in one-carbon metabolism; tetrahydrofolate interconversion. The protein operates within amino-acid biosynthesis; glycine biosynthesis; glycine from L-serine: step 1/1. Functionally, catalyzes the reversible interconversion of serine and glycine with tetrahydrofolate (THF) serving as the one-carbon carrier. Also exhibits THF-independent aldolase activity toward beta-hydroxyamino acids, producing glycine and aldehydes, via a retro-aldol mechanism. This Methanothrix thermoacetophila (strain DSM 6194 / JCM 14653 / NBRC 101360 / PT) (Methanosaeta thermophila) protein is Serine hydroxymethyltransferase.